Reading from the N-terminus, the 323-residue chain is Transcription initiation factor IIB 7 (323 aa).

Positions 1-16 are enriched in basic and acidic residues; that stretch reads MTRSTRQRERETAAKQ. A disordered region spans residues 1–35; that stretch reads MTRSTRQRERETAAKQEEEEDSEEGVRECPECGSD. Residues 24–56 form a TFIIB-type zinc finger; that stretch reads EGVRECPECGSDNLVKSSDRAELVCNDCGLVVE. C29, C32, C48, and C51 together coordinate Zn(2+). A run of 2 repeats spans residues 142–225 and 236–317.

Belongs to the TFIIB family.

Stabilizes TBP binding to an archaeal box-A promoter. Also responsible for recruiting RNA polymerase II to the pre-initiation complex (DNA-TBP-TFIIB). The chain is Transcription initiation factor IIB 7 from Halobacterium salinarum (strain ATCC 700922 / JCM 11081 / NRC-1) (Halobacterium halobium).